Consider the following 972-residue polypeptide: Cycloisomaltooligosaccharide glucanotransferase (972 aa).

The N-terminal stretch at 1–38 is a signal peptide; sequence MVRFMYALRKRRLSLLLAMSLLVMCVASVVSPPPQALA. 2 CBM6 domains span residues 421–546 and 748–871; these read TRYE…LTLG and DIYE…LDLD.

This sequence belongs to the glycosyl hydrolase 66 family. In terms of assembly, monomer.

The enzyme catalyses cyclizes part of a (1-&gt;6)-alpha-D-glucan chain by formation of a (1-&gt;6)-alpha-D-glucosidic bond.. In terms of biological role, produces cycloisomaltooligosaccharide from dextran containing 7, 8 or 9 glucose units. The enzyme is specific for (1-&gt;6)-alpha-D-glucans (dextrans) and, without activity toward (1-&gt;4)-alpha-D-glucans, such as amylose. It also has no activity on oligosaccharides, such as amylopectin and pullulan, containing (1-&gt;6)-alpha-D-glucosidic linkages at branch points. The sequence is that of Cycloisomaltooligosaccharide glucanotransferase from Niallia circulans (Bacillus circulans).